We begin with the raw amino-acid sequence, 34 residues long: Aspartate aminotransferase 2 (34 aa).

Belongs to the class-I pyridoxal-phosphate-dependent aminotransferase family. As to quaternary structure, homodimer. Pyridoxal 5'-phosphate serves as cofactor.

It catalyses the reaction L-aspartate + 2-oxoglutarate = oxaloacetate + L-glutamate. Important for the metabolism of amino acids and Krebs-cycle related organic acids. In plants, it is involved in nitrogen metabolism and in aspects of carbon and energy metabolism. The chain is Aspartate aminotransferase 2 from Pseudotsuga menziesii (Douglas-fir).